A 122-amino-acid chain; its full sequence is Large ribosomal subunit protein uL14 (122 aa).

It belongs to the universal ribosomal protein uL14 family. In terms of assembly, part of the 50S ribosomal subunit. Forms a cluster with proteins L3 and L19. In the 70S ribosome, L14 and L19 interact and together make contacts with the 16S rRNA in bridges B5 and B8.

Binds to 23S rRNA. Forms part of two intersubunit bridges in the 70S ribosome. This chain is Large ribosomal subunit protein uL14, found in Thermotoga maritima (strain ATCC 43589 / DSM 3109 / JCM 10099 / NBRC 100826 / MSB8).